The sequence spans 390 residues: Dual-specificity RNA methyltransferase RlmN (390 aa).

The active-site Proton acceptor is glutamate 110. The 240-residue stretch at 116 to 355 (EADRATLCVS…VIIRKTRGDD (240 aa)) folds into the Radical SAM core domain. A disulfide bridge connects residues cysteine 123 and cysteine 360. [4Fe-4S] cluster contacts are provided by cysteine 130, cysteine 134, and cysteine 137. Residues 184–185 (GE), serine 216, 238–240 (SLH), and asparagine 317 each bind S-adenosyl-L-methionine. Residue cysteine 360 is the S-methylcysteine intermediate of the active site.

The protein belongs to the radical SAM superfamily. RlmN family. Requires [4Fe-4S] cluster as cofactor.

It is found in the cytoplasm. The catalysed reaction is adenosine(2503) in 23S rRNA + 2 reduced [2Fe-2S]-[ferredoxin] + 2 S-adenosyl-L-methionine = 2-methyladenosine(2503) in 23S rRNA + 5'-deoxyadenosine + L-methionine + 2 oxidized [2Fe-2S]-[ferredoxin] + S-adenosyl-L-homocysteine. It catalyses the reaction adenosine(37) in tRNA + 2 reduced [2Fe-2S]-[ferredoxin] + 2 S-adenosyl-L-methionine = 2-methyladenosine(37) in tRNA + 5'-deoxyadenosine + L-methionine + 2 oxidized [2Fe-2S]-[ferredoxin] + S-adenosyl-L-homocysteine. Its function is as follows. Specifically methylates position 2 of adenine 2503 in 23S rRNA and position 2 of adenine 37 in tRNAs. m2A2503 modification seems to play a crucial role in the proofreading step occurring at the peptidyl transferase center and thus would serve to optimize ribosomal fidelity. This is Dual-specificity RNA methyltransferase RlmN from Haemophilus influenzae (strain ATCC 51907 / DSM 11121 / KW20 / Rd).